A 294-amino-acid chain; its full sequence is Pyridoxal 5'-phosphate synthase subunit PdxS (294 aa).

D-ribose 5-phosphate is bound at residue D24. K81 (schiff-base intermediate with D-ribose 5-phosphate) is an active-site residue. G153 contacts D-ribose 5-phosphate. Residue R165 coordinates D-glyceraldehyde 3-phosphate. D-ribose 5-phosphate-binding positions include G214 and 235–236 (GS).

The protein belongs to the PdxS/SNZ family. As to quaternary structure, in the presence of PdxT, forms a dodecamer of heterodimers.

It catalyses the reaction aldehydo-D-ribose 5-phosphate + D-glyceraldehyde 3-phosphate + L-glutamine = pyridoxal 5'-phosphate + L-glutamate + phosphate + 3 H2O + H(+). It functions in the pathway cofactor biosynthesis; pyridoxal 5'-phosphate biosynthesis. In terms of biological role, catalyzes the formation of pyridoxal 5'-phosphate from ribose 5-phosphate (RBP), glyceraldehyde 3-phosphate (G3P) and ammonia. The ammonia is provided by the PdxT subunit. Can also use ribulose 5-phosphate and dihydroxyacetone phosphate as substrates, resulting from enzyme-catalyzed isomerization of RBP and G3P, respectively. The sequence is that of Pyridoxal 5'-phosphate synthase subunit PdxS from Bacillus velezensis (strain DSM 23117 / BGSC 10A6 / LMG 26770 / FZB42) (Bacillus amyloliquefaciens subsp. plantarum).